Reading from the N-terminus, the 120-residue chain is Large ribosomal subunit protein eL8 (120 aa).

This sequence belongs to the eukaryotic ribosomal protein eL8 family. In terms of assembly, part of the 50S ribosomal subunit. Probably part of the RNase P complex.

It is found in the cytoplasm. Multifunctional RNA-binding protein that recognizes the K-turn motif in ribosomal RNA, the RNA component of RNase P, box H/ACA, box C/D and box C'/D' sRNAs. The sequence is that of Large ribosomal subunit protein eL8 from Methanosarcina mazei (strain ATCC BAA-159 / DSM 3647 / Goe1 / Go1 / JCM 11833 / OCM 88) (Methanosarcina frisia).